The following is a 106-amino-acid chain: Putative toxin Rv3098A/RVBD_3098A (106 aa).

This sequence belongs to the PemK/MazF family. In terms of assembly, forms a complex with cognate antitoxin Rv3098B/RVBD_3098B.

In terms of biological role, putative toxic component of a possible type II toxin-antitoxin (TA) system. Its toxic effect may be neutralized by cognate antitoxin Rv3098B/RVBD_3098B. The chain is Putative toxin Rv3098A/RVBD_3098A from Mycobacterium tuberculosis (strain ATCC 25618 / H37Rv).